The primary structure comprises 889 residues: Cytoplasmic aconitate hydratase (889 aa).

Residues glutamine 86 and 205-207 (DSH) contribute to the substrate site. Residues cysteine 437, cysteine 503, and cysteine 506 each coordinate [4Fe-4S] cluster. Arginine 536 and arginine 541 together coordinate substrate. A Phosphothreonine modification is found at threonine 628. Substrate-binding positions include arginine 699 and 779-780 (SR).

It belongs to the aconitase/IPM isomerase family. Interacts (when associated with the 4Fe-4S) with FBXL5. Interacts with frataxin(81-210). It depends on [4Fe-4S] cluster as a cofactor.

It is found in the cytoplasm. The protein localises to the cytosol. It catalyses the reaction citrate = D-threo-isocitrate. In terms of biological role, bifunctional iron sensor that switches between 2 activities depending on iron availability. Iron deprivation, promotes its mRNA binding activity through which it regulates the expression of genes involved in iron uptake, sequestration and utilization. Binds to iron-responsive elements (IRES) in the untranslated region of target mRNAs preventing for instance the translation of ferritin and aminolevulinic acid synthase and stabilizing the transferrin receptor mRNA. Conversely, when cellular iron levels are high, binds a 4Fe-4S cluster which precludes RNA binding activity and promotes the aconitase activity, the isomerization of citrate to isocitrate via cis-aconitate. The sequence is that of Cytoplasmic aconitate hydratase (ACO1) from Homo sapiens (Human).